We begin with the raw amino-acid sequence, 109 residues long: MTYVVNDECVKCKYTDCVDVCPVDCFYEGEFMLVINPDECIDCGVCVPDCPIDAIKPESPELIEWVERAKDFIENKGWKNITKKKPALPDADKFKDEKNKFNKYINNMN.

4Fe-4S ferredoxin-type domains are found at residues 2-30 (TYVV…YEGE) and 31-60 (FMLV…PESP). The [3Fe-4S] cluster site is built by cysteine 9 and cysteine 17. Positions 21, 40, 43, and 46 each coordinate [4Fe-4S] cluster. [3Fe-4S] cluster is bound at residue cysteine 50.

[4Fe-4S] cluster serves as cofactor. The cofactor is [3Fe-4S] cluster.

Its function is as follows. Ferredoxins are iron-sulfur proteins that transfer electrons in a wide variety of metabolic reactions. This is Ferredoxin (fdxA) from Rickettsia felis (strain ATCC VR-1525 / URRWXCal2) (Rickettsia azadi).